A 191-amino-acid chain; its full sequence is Transcription factor E (191 aa).

In terms of domain architecture, HTH TFE/IIEalpha-type spans 4–87 (RNKELLEIGR…YWHIETKRLP (84 aa)). The disordered stretch occupies residues 170–191 (APPKKEKKGKKSKKRSKKSKKK). Residues 174 to 191 (KEKKGKKSKKRSKKSKKK) are compositionally biased toward basic residues.

This sequence belongs to the TFE family. Monomer. Interaction with RNA polymerase subunits RpoF and RpoE is necessary for Tfe stimulatory transcription activity. Able to interact with Tbp and RNA polymerase in the absence of DNA promoter. Interacts both with the preinitiation and elongation complexes.

In terms of biological role, transcription factor that plays a role in the activation of archaeal genes transcribed by RNA polymerase. Facilitates transcription initiation by enhancing TATA-box recognition by TATA-box-binding protein (Tbp), and transcription factor B (Tfb) and RNA polymerase recruitment. Not absolutely required for transcription in vitro, but particularly important in cases where Tbp or Tfb function is not optimal. It dynamically alters the nucleic acid-binding properties of RNA polymerases by stabilizing the initiation complex and destabilizing elongation complexes. Seems to translocate with the RNA polymerase following initiation and acts by binding to the non template strand of the transcription bubble in elongation complexes. The sequence is that of Transcription factor E from Pyrococcus horikoshii (strain ATCC 700860 / DSM 12428 / JCM 9974 / NBRC 100139 / OT-3).